Consider the following 262-residue polypeptide: Adenosylcobinamide-GDP ribazoletransferase (262 aa).

Transmembrane regions (helical) follow at residues 4–26 (AWNGWLLALQLFTTIPIRRSIAW), 37–57 (CMPLAGALIGALSAGVYALFS), 59–79 (FSFSSPLVWALLLLWLGIWMA), 112–132 (VGAFAVLSLICLLSFRWLFLY), 139–159 (IPPALFAAVPLLSRAGAAWLL), 183–203 (AIWALGLAFVLLSLLCASTAI), 205–225 (VQTGAALAAAAVVLAAAAKPW), and 237–257 (VLGALIEGGETVLWGVIWLLH).

Belongs to the CobS family. Mg(2+) serves as cofactor.

Its subcellular location is the cell membrane. The catalysed reaction is alpha-ribazole + adenosylcob(III)inamide-GDP = adenosylcob(III)alamin + GMP + H(+). It carries out the reaction alpha-ribazole 5'-phosphate + adenosylcob(III)inamide-GDP = adenosylcob(III)alamin 5'-phosphate + GMP + H(+). The protein operates within cofactor biosynthesis; adenosylcobalamin biosynthesis; adenosylcobalamin from cob(II)yrinate a,c-diamide: step 7/7. In terms of biological role, joins adenosylcobinamide-GDP and alpha-ribazole to generate adenosylcobalamin (Ado-cobalamin). Also synthesizes adenosylcobalamin 5'-phosphate from adenosylcobinamide-GDP and alpha-ribazole 5'-phosphate. The sequence is that of Adenosylcobinamide-GDP ribazoletransferase from Geobacillus kaustophilus (strain HTA426).